Reading from the N-terminus, the 143-residue chain is D-aminoacyl-tRNA deacylase (143 aa).

Positions G135 to P136 match the Gly-cisPro motif, important for rejection of L-amino acids motif.

Belongs to the DTD family. As to quaternary structure, homodimer.

It localises to the cytoplasm. The catalysed reaction is glycyl-tRNA(Ala) + H2O = tRNA(Ala) + glycine + H(+). It carries out the reaction a D-aminoacyl-tRNA + H2O = a tRNA + a D-alpha-amino acid + H(+). Functionally, an aminoacyl-tRNA editing enzyme that deacylates mischarged D-aminoacyl-tRNAs. Also deacylates mischarged glycyl-tRNA(Ala), protecting cells against glycine mischarging by AlaRS. Acts via tRNA-based rather than protein-based catalysis; rejects L-amino acids rather than detecting D-amino acids in the active site. By recycling D-aminoacyl-tRNA to D-amino acids and free tRNA molecules, this enzyme counteracts the toxicity associated with the formation of D-aminoacyl-tRNA entities in vivo and helps enforce protein L-homochirality. This chain is D-aminoacyl-tRNA deacylase, found in Mycolicibacterium paratuberculosis (strain ATCC BAA-968 / K-10) (Mycobacterium paratuberculosis).